The primary structure comprises 147 residues: Hemoglobin subunit gamma-1 (147 aa).

Glycine 2 carries the post-translational modification N-acetylglycine. The region spanning 3–147 (HFTEEDKATI…VASALSSRYH (145 aa)) is the Globin domain. The residue at position 13 (threonine 13) is a Phosphothreonine. Phosphoserine is present on residues serine 45, serine 51, and serine 53. At lysine 60 the chain carries N6-acetyllysine. Histidine 64 lines the heme b pocket. Lysine 83 bears the N6-acetyllysine mark. Heme b is bound at residue histidine 93. The residue at position 94 (cysteine 94) is an S-nitrosocysteine. A Phosphoserine modification is found at serine 140.

Belongs to the globin family. In terms of assembly, heterotetramer of two alpha chains and two gamma chains in fetal hemoglobin (Hb F). The ratio of gamma-G to gamma-A chains in is approximately 2:1 in infant chimpanzee, and 1:2 in the adult. As to expression, red blood cells.

In terms of biological role, gamma chains make up the fetal hemoglobin F, in combination with alpha chains. The protein is Hemoglobin subunit gamma-1 (HBG1) of Pan troglodytes (Chimpanzee).